The chain runs to 228 residues: Ribosomal RNA small subunit methyltransferase G (228 aa).

S-adenosyl-L-methionine contacts are provided by residues Gly92, Phe97, 115–117 (EAT), 143–144 (AE), and Arg156.

It belongs to the methyltransferase superfamily. RNA methyltransferase RsmG family.

The protein resides in the cytoplasm. In terms of biological role, specifically methylates the N7 position of a guanine in 16S rRNA. The protein is Ribosomal RNA small subunit methyltransferase G of Thermosynechococcus vestitus (strain NIES-2133 / IAM M-273 / BP-1).